Here is a 115-residue protein sequence, read N- to C-terminus: Cytochrome c oxidase assembly protein COX16 homolog, mitochondrial (115 aa).

Residues 1 to 6 (MSRLKF) are Mitochondrial matrix-facing. The chain crosses the membrane as a helical span at residues 7–29 (VRVGLPFFAIVLGSAYGLHFFQQ). Topologically, residues 30 to 115 (VRFDFRKIKQ…RKVRELKSNV (86 aa)) are mitochondrial intermembrane.

This sequence belongs to the COX16 family.

The protein localises to the mitochondrion inner membrane. In terms of biological role, required for the assembly of the mitochondrial respiratory chain complex IV (CIV), also known as cytochrome c oxidase. This is Cytochrome c oxidase assembly protein COX16 homolog, mitochondrial from Caenorhabditis elegans.